Reading from the N-terminus, the 270-residue chain is Elongation factor Ts (270 aa).

The tract at residues 77-80 is involved in Mg(2+) ion dislocation from EF-Tu; that stretch reads TDFV.

Belongs to the EF-Ts family.

The protein localises to the cytoplasm. In terms of biological role, associates with the EF-Tu.GDP complex and induces the exchange of GDP to GTP. It remains bound to the aminoacyl-tRNA.EF-Tu.GTP complex up to the GTP hydrolysis stage on the ribosome. This chain is Elongation factor Ts, found in Nocardioides sp. (strain ATCC BAA-499 / JS614).